The chain runs to 636 residues: ATP-dependent DNA helicase YoaA (636 aa).

The Helicase ATP-binding domain occupies 10-272 (QLAKAIPGFK…KDTQQLQKCA (263 aa)). Residue 45-52 (AGTGTGKT) coordinates ATP. Residues Cys108, Cys168, Cys173, and Cys179 each contribute to the [4Fe-4S] cluster site. Residues 225 to 228 (DEAH) carry the DEAH box motif.

The protein belongs to the helicase family. DinG subfamily. In terms of assembly, interacts with the DNA polymerase III subunit Chi (holC), probably as a 1:1 complex. [4Fe-4S] cluster serves as cofactor. It depends on Mg(2+) as a cofactor.

It carries out the reaction Couples ATP hydrolysis with the unwinding of duplex DNA at the replication fork by translocating in the 5'-3' direction. This creates two antiparallel DNA single strands (ssDNA). The leading ssDNA polymer is the template for DNA polymerase III holoenzyme which synthesizes a continuous strand.. The enzyme catalyses ATP + H2O = ADP + phosphate + H(+). With respect to regulation, non-hydrolyzable ATP analogs ATP-gamma-S and adenylyl-imidodiphosphate (AMP-PNP) inhibit helicase activity. Functionally, DNA-dependent ATPase and 5'-3' DNA helicase. Has single-stranded (ss)DNA-dependent ATPase activity and 5'-3' helicase activity on forked DNA; both activities were measure in a YoaA:HolC (chi) complex. Requires a 20-35 nucleotide (nt) 5'-ssDNA tail; dsDNA with a 20 nt gap is also unwound. Unwinds damaged 3' nascent ends (such as those terminated by 3' azidothymidine (AZT), 3' dideoxy-C or an abasic site on the translocating strand), to promote repair and AZT excision. Without HolC the protein has much lower activity which could be due to YoaA instability or helicase stimulation by HolC. Genetically identified as involved in the repair of replication forks and tolerance of the chain-terminating nucleoside analog AZT. May act in proofreading during nucleotide misincorporation, it appears to aid in the removal of potential A-to-T transversion mutations in ndk mutants. The protein is ATP-dependent DNA helicase YoaA (yoaA) of Escherichia coli (strain K12).